A 182-amino-acid chain; its full sequence is Dual-action ribosomal maturation protein DarP (182 aa).

It belongs to the DarP family.

The protein localises to the cytoplasm. Functionally, member of a network of 50S ribosomal subunit biogenesis factors which assembles along the 30S-50S interface, preventing incorrect 23S rRNA structures from forming. Promotes peptidyl transferase center (PTC) maturation. In Yersinia pestis, this protein is Dual-action ribosomal maturation protein DarP.